A 289-amino-acid chain; its full sequence is E3 ubiquitin-protein ligase MARCHF8 (289 aa).

The tract at residues 1–68 is disordered; it reads MNMPLHQISA…SAPVSSFPRT (68 aa). Over residues 25–39 the composition is skewed to basic and acidic residues; sequence KTKEKEREEQNEKTL. Residues 50-64 are compositionally biased toward low complexity; the sequence is SKAGGSSVASAPVSS. The segment at 70–131 adopts an RING-CH-type zinc-finger fold; that stretch reads VTPSNQDICR…ELCKYEFIME (62 aa). Residues Cys78, Cys81, Cys95, Cys97, His105, Cys108, Cys121, and Cys124 each coordinate Zn(2+). Transmembrane regions (helical) follow at residues 155–175 and 195–215; these read CSVT…YVLI and FWTK…FMYV.

As to quaternary structure, interacts with CD86.

Its subcellular location is the golgi apparatus membrane. The protein resides in the endoplasmic reticulum membrane. It localises to the cytoplasmic vesicle membrane. The protein localises to the lysosome membrane. It is found in the early endosome membrane. It catalyses the reaction S-ubiquitinyl-[E2 ubiquitin-conjugating enzyme]-L-cysteine + [acceptor protein]-L-lysine = [E2 ubiquitin-conjugating enzyme]-L-cysteine + N(6)-ubiquitinyl-[acceptor protein]-L-lysine.. The protein operates within protein modification; protein ubiquitination. E3 ubiquitin-protein ligase that plays several important roles in innate immunity and adaptive immunity. Mediates ubiquitination of CD86 and MHC class II proteins, such as HLA-DR alpha and beta, and promotes their subsequent endocytosis and sorting to lysosomes via multivesicular bodies. Possesses a very broad antiviral activity by specifically inactivating different viral fusion proteins. Targets and ubiquitinates cytoplasmic lysine residues of viral envelope glycoproteins with single transmembrane domains leading to their lysosomal degradation. Mediates the regulation of constitutive ubiquitination and trafficking of the viral restriction factor BST2 within the endocytic pathway. Plays a role in maintenance of immune tolerance to self by promoting the turnover and proteasomal degradation of PD-L1/CD274 via ubiquitination. Catalyzes the 'Lys-63'-linked polyubiquitylation of cGAS thereby inhibiting its DNA binding ability and impairing its antiviral innate immunity. Negatively regulates IL7-mediated T-cell homeostasis by mediating 'Lys-27'-linked polyubiquitination of IL7R, leading to its lysosomal degradation. The sequence is that of E3 ubiquitin-protein ligase MARCHF8 (MARCHF8) from Bos taurus (Bovine).